The primary structure comprises 747 residues: DNA topoisomerase 4 subunit A (747 aa).

The Topo IIA-type catalytic domain occupies 35 to 498 (LPFIGDGLKP…EAKMISESDM (464 aa)). Tyr124 functions as the O-(5'-phospho-DNA)-tyrosine intermediate in the catalytic mechanism.

It belongs to the type II topoisomerase GyrA/ParC subunit family. ParC type 1 subfamily. In terms of assembly, heterotetramer composed of ParC and ParE.

Its subcellular location is the cell membrane. The enzyme catalyses ATP-dependent breakage, passage and rejoining of double-stranded DNA.. Functionally, topoisomerase IV is essential for chromosome segregation. It relaxes supercoiled DNA. Performs the decatenation events required during the replication of a circular DNA molecule. The protein is DNA topoisomerase 4 subunit A of Haemophilus influenzae (strain ATCC 51907 / DSM 11121 / KW20 / Rd).